We begin with the raw amino-acid sequence, 316 residues long: Ribosomal RNA small subunit methyltransferase H (316 aa).

Residues 35–37 (AGH), aspartate 55, phenylalanine 84, aspartate 105, and glutamine 112 each bind S-adenosyl-L-methionine.

The protein belongs to the methyltransferase superfamily. RsmH family.

It localises to the cytoplasm. It catalyses the reaction cytidine(1402) in 16S rRNA + S-adenosyl-L-methionine = N(4)-methylcytidine(1402) in 16S rRNA + S-adenosyl-L-homocysteine + H(+). In terms of biological role, specifically methylates the N4 position of cytidine in position 1402 (C1402) of 16S rRNA. The polypeptide is Ribosomal RNA small subunit methyltransferase H (Streptococcus pneumoniae (strain JJA)).